Reading from the N-terminus, the 196-residue chain is N-(5'-phosphoribosyl)anthranilate isomerase (196 aa).

The protein belongs to the TrpF family.

It carries out the reaction N-(5-phospho-beta-D-ribosyl)anthranilate = 1-(2-carboxyphenylamino)-1-deoxy-D-ribulose 5-phosphate. Its pathway is amino-acid biosynthesis; L-tryptophan biosynthesis; L-tryptophan from chorismate: step 3/5. The polypeptide is N-(5'-phosphoribosyl)anthranilate isomerase (Sulfurovum sp. (strain NBC37-1)).